Consider the following 335-residue polypeptide: Phospholipid scramblase 1 (335 aa).

Positions methionine 1–proline 101 are proline-rich domain (PRD). The tract at residues methionine 1–tryptophan 102 is disordered. Residues methionine 1–lysine 305 are Cytoplasmic-facing. 6 repeat units span residues glutamine 23–proline 29, glutamine 30–proline 36, glutamine 37–proline 43, glutamine 44–proline 50, glutamine 51–proline 57, and glutamine 58–proline 64. The 7 X 7 AA tandem repeats of Q-G-P-Y-[AP]-G-P stretch occupies residues glutamine 23 to proline 71. Residues tyrosine 26–glutamine 37 are compositionally biased toward pro residues. Positions glycine 59 to proline 72 are enriched in pro residues. The short motif at proline 64–proline 72 is the SH3-binding 1 element. A 7; approximate repeat occupies glutamine 65–proline 71. Phosphotyrosine; by ABL is present on tyrosine 91. The short motif at proline 101–proline 109 is the SH3-binding 2 element. Threonine 178 carries the phosphothreonine; by PKC/PRKCD modification. S-palmitoyl cysteine attachment occurs at residues cysteine 201, cysteine 202, cysteine 205, and cysteine 206. The Nuclear localization signal signature appears at glycine 274–phenylalanine 283. A helical membrane pass occupies residues methionine 306 to phenylalanine 322. The Extracellular segment spans residues glutamate 323–tryptophan 335.

The protein belongs to the phospholipid scramblase family. In terms of assembly, forms homooligomers in the presence of calcium. Interacts with ABL. Interacts with RELT, RELL1 and RELL2. Interacts with OXSR1 in the presence of RELT. Interacts with OCLN, TOP2A and TOP2B. Interacts with TRPC1, TRPC4 and TRPC5. Interacts with ILDR1. Ca(2+) is required as a cofactor. Requires Mg(2+) as cofactor. Zn(2+) serves as cofactor. In terms of processing, phosphorylated on tyrosine residues. Phosphorylated by OXSR1 in the presence of RELT. Phosphorylation at Thr-178 by PKC/PKCD increases its phospholipid scramblase activity during both cell stimulation and apoptosis. Palmitoylation is required for its phospholipid scramblase activity. Palmitoylation regulates its localization to the cell membrane or the nucleus; trafficking to the cell membrane is dependent upon palmitoylation whereas in the absence of palmitoylation, localizes to the nucleus.

Its subcellular location is the cell membrane. The protein resides in the nucleus. It localises to the cytoplasm. It is found in the perinuclear region. It catalyses the reaction a 1,2-diacyl-sn-glycero-3-phosphocholine(in) = a 1,2-diacyl-sn-glycero-3-phosphocholine(out). It carries out the reaction a 1,2-diacyl-sn-glycero-3-phosphoethanolamine(in) = a 1,2-diacyl-sn-glycero-3-phosphoethanolamine(out). The catalysed reaction is a 1,2-diacyl-sn-glycero-3-phospho-L-serine(in) = a 1,2-diacyl-sn-glycero-3-phospho-L-serine(out). Its function is as follows. Catalyzes calcium-induced ATP-independent rapid bidirectional and non-specific distribution of phospholipids (lipid scrambling or lipid flip-flop) between the inner and outer leaflet of the plasma membrane resulting in collapse of the phospholipid asymmetry which leads to phosphatidylserine externalization on the cell surface. Mediates calcium-dependent phosphatidylserine externalization and apoptosis in neurons via its association with TRPC5. Also exhibits magnesium-dependent nuclease activity against double-stranded DNA and RNA but not single-stranded DNA and can enhance DNA decatenation mediated by TOP2A. Negatively regulates FcR-mediated phagocytosis in differentiated macrophages. May contribute to cytokine-regulated cell proliferation and differentiation. The sequence is that of Phospholipid scramblase 1 (Plscr1) from Rattus norvegicus (Rat).